The chain runs to 302 residues: Deoxyhypusine hydroxylase (302 aa).

Position 1 is an N-acetylmethionine (Met-1). HEAT-like PBS-type repeat units lie at residues 54–80, 87–113, 174–200, 205–231, and 238–264; these read LKHE…VLQD, VRHE…YSSD, ERYR…GLHC, FRHE…ALAR, and VRHE…HADD. Residues His-56, His-89, and Glu-90 each contribute to the Fe cation site. 3 residues coordinate Fe cation: His-207, His-240, and Glu-241.

This sequence belongs to the deoxyhypusine hydroxylase family. Requires Fe(2+) as cofactor.

It catalyses the reaction [eIF5A protein]-deoxyhypusine + AH2 + O2 = [eIF5A protein]-hypusine + A + H2O. Its pathway is protein modification; eIF5A hypusination. In terms of biological role, catalyzes the hydroxylation of the N(6)-(4-aminobutyl)-L-lysine intermediate produced by deoxyhypusine synthase/DHPS on a critical lysine of the eukaryotic translation initiation factor 5A/eIF-5A. This is the second step of the post-translational modification of that lysine into an unusual amino acid residue named hypusine. Hypusination is unique to mature eIF-5A factor and is essential for its function. This is Deoxyhypusine hydroxylase from Homo sapiens (Human).